The sequence spans 220 residues: Deoxyribose-phosphate aldolase (220 aa).

Aspartate 89 (proton donor/acceptor) is an active-site residue. Lysine 151 acts as the Schiff-base intermediate with acetaldehyde in catalysis. Catalysis depends on lysine 180, which acts as the Proton donor/acceptor.

This sequence belongs to the DeoC/FbaB aldolase family. DeoC type 1 subfamily.

It localises to the cytoplasm. The catalysed reaction is 2-deoxy-D-ribose 5-phosphate = D-glyceraldehyde 3-phosphate + acetaldehyde. It participates in carbohydrate degradation; 2-deoxy-D-ribose 1-phosphate degradation; D-glyceraldehyde 3-phosphate and acetaldehyde from 2-deoxy-alpha-D-ribose 1-phosphate: step 2/2. In terms of biological role, catalyzes a reversible aldol reaction between acetaldehyde and D-glyceraldehyde 3-phosphate to generate 2-deoxy-D-ribose 5-phosphate. The chain is Deoxyribose-phosphate aldolase from Streptococcus mutans serotype c (strain ATCC 700610 / UA159).